The primary structure comprises 454 residues: Pup--protein ligase (454 aa).

Glu-9 is a Mg(2+) binding site. Residue Arg-53 participates in ATP binding. Tyr-55 is a binding site for Mg(2+). Asp-57 serves as the catalytic Proton acceptor. Residue Glu-63 coordinates Mg(2+). Positions 66 and 421 each coordinate ATP.

The protein belongs to the Pup ligase/Pup deamidase family. Pup-conjugating enzyme subfamily.

The enzyme catalyses ATP + [prokaryotic ubiquitin-like protein]-L-glutamate + [protein]-L-lysine = ADP + phosphate + N(6)-([prokaryotic ubiquitin-like protein]-gamma-L-glutamyl)-[protein]-L-lysine.. Its pathway is protein degradation; proteasomal Pup-dependent pathway. The protein operates within protein modification; protein pupylation. Functionally, catalyzes the covalent attachment of the prokaryotic ubiquitin-like protein modifier Pup to the proteasomal substrate proteins, thereby targeting them for proteasomal degradation. This tagging system is termed pupylation. The ligation reaction involves the side-chain carboxylate of the C-terminal glutamate of Pup and the side-chain amino group of a substrate lysine. This is Pup--protein ligase from Frankia casuarinae (strain DSM 45818 / CECT 9043 / HFP020203 / CcI3).